A 370-amino-acid polypeptide reads, in one-letter code: Probable phosphoserine aminotransferase (370 aa).

Arg-45 is a binding site for L-glutamate. Pyridoxal 5'-phosphate-binding positions include Gly-79–Thr-80, Trp-105, Thr-154, Asp-175, and Gln-198. Lys-199 is modified (N6-(pyridoxal phosphate)lysine). Asn-240 to Thr-241 contacts pyridoxal 5'-phosphate.

The protein belongs to the class-V pyridoxal-phosphate-dependent aminotransferase family. SerC subfamily. In terms of assembly, homodimer. It depends on pyridoxal 5'-phosphate as a cofactor.

The catalysed reaction is O-phospho-L-serine + 2-oxoglutarate = 3-phosphooxypyruvate + L-glutamate. The enzyme catalyses 4-(phosphooxy)-L-threonine + 2-oxoglutarate = (R)-3-hydroxy-2-oxo-4-phosphooxybutanoate + L-glutamate. It functions in the pathway amino-acid biosynthesis; L-serine biosynthesis; L-serine from 3-phospho-D-glycerate: step 2/3. Its pathway is cofactor biosynthesis; pyridoxine 5'-phosphate biosynthesis; pyridoxine 5'-phosphate from D-erythrose 4-phosphate: step 3/5. Catalyzes the reversible conversion of 3-phosphohydroxypyruvate to phosphoserine and of 3-hydroxy-2-oxo-4-phosphonooxybutanoate to phosphohydroxythreonine. In Caenorhabditis elegans, this protein is Probable phosphoserine aminotransferase.